A 215-amino-acid polypeptide reads, in one-letter code: Glutathione S-transferase D6 (215 aa).

The 80-residue stretch at 1-80 folds into the GST N-terminal domain; that stretch reads MDLYNMSGSP…YLVEQYGKDD (80 aa). Glutathione contacts are provided by residues Ser-9, 50-52, and 64-66; these read HTI and ETR. The 121-residue stretch at 86–206 folds into the GST C-terminal domain; it reads DPQKQALINQ…LARIQSAKKF (121 aa).

Belongs to the GST superfamily. Delta family. In terms of assembly, homodimer.

The enzyme catalyses RX + glutathione = an S-substituted glutathione + a halide anion + H(+). Functionally, conjugation of reduced glutathione to a wide number of exogenous and endogenous hydrophobic electrophiles. May be involved in detoxification. The polypeptide is Glutathione S-transferase D6 (Drosophila melanogaster (Fruit fly)).